The chain runs to 393 residues: NAD(P)H-quinone oxidoreductase subunit H, chloroplastic (393 aa).

The protein belongs to the complex I 49 kDa subunit family. As to quaternary structure, NDH is composed of at least 16 different subunits, 5 of which are encoded in the nucleus.

Its subcellular location is the plastid. It localises to the chloroplast thylakoid membrane. It carries out the reaction a plastoquinone + NADH + (n+1) H(+)(in) = a plastoquinol + NAD(+) + n H(+)(out). The catalysed reaction is a plastoquinone + NADPH + (n+1) H(+)(in) = a plastoquinol + NADP(+) + n H(+)(out). Functionally, NDH shuttles electrons from NAD(P)H:plastoquinone, via FMN and iron-sulfur (Fe-S) centers, to quinones in the photosynthetic chain and possibly in a chloroplast respiratory chain. The immediate electron acceptor for the enzyme in this species is believed to be plastoquinone. Couples the redox reaction to proton translocation, and thus conserves the redox energy in a proton gradient. The polypeptide is NAD(P)H-quinone oxidoreductase subunit H, chloroplastic (Arabis hirsuta (Hairy rock-cress)).